The following is a 94-amino-acid chain: Putative regulatory protein THA_332 (94 aa).

It belongs to the RemA family.

This Thermosipho africanus (strain TCF52B) protein is Putative regulatory protein THA_332.